Reading from the N-terminus, the 430-residue chain is Trigger factor (430 aa).

The PPIase FKBP-type domain maps to 164–249 (DDWAVIDHEG…LKALKTRQLP (86 aa)).

It belongs to the FKBP-type PPIase family. Tig subfamily.

The protein localises to the cytoplasm. It carries out the reaction [protein]-peptidylproline (omega=180) = [protein]-peptidylproline (omega=0). In terms of biological role, involved in protein export. Acts as a chaperone by maintaining the newly synthesized protein in an open conformation. Functions as a peptidyl-prolyl cis-trans isomerase. This chain is Trigger factor, found in Anaeromyxobacter sp. (strain Fw109-5).